The primary structure comprises 133 residues: Small ribosomal subunit protein bS6 (133 aa).

This sequence belongs to the bacterial ribosomal protein bS6 family.

Binds together with bS18 to 16S ribosomal RNA. This is Small ribosomal subunit protein bS6 from Chlorobium phaeovibrioides (strain DSM 265 / 1930) (Prosthecochloris vibrioformis (strain DSM 265)).